A 229-amino-acid chain; its full sequence is Uracil-DNA glycosylase (229 aa).

D64 serves as the catalytic Proton acceptor.

The protein belongs to the uracil-DNA glycosylase (UDG) superfamily. UNG family.

It is found in the cytoplasm. The enzyme catalyses Hydrolyzes single-stranded DNA or mismatched double-stranded DNA and polynucleotides, releasing free uracil.. Its function is as follows. Excises uracil residues from the DNA which can arise as a result of misincorporation of dUMP residues by DNA polymerase or due to deamination of cytosine. The chain is Uracil-DNA glycosylase from Escherichia coli O45:K1 (strain S88 / ExPEC).